Consider the following 961-residue polypeptide: Gamma-tubulin small complex component GCP2 (961 aa).

The disordered stretch occupies residues 15 to 76 (NLHRSPKLAT…KPSIPPLKSE (62 aa)). Over residues 43–54 (LGSNVVSHPTRS) the composition is skewed to polar residues. A compositionally biased stretch (basic and acidic residues) spans 55-65 (SPEKTTDKPAD).

The protein belongs to the TUBGCP family. In terms of assembly, component of the gamma-tubulin small complex (gamma-TuSC) composed of tubulin gamma chain, gamma-tubulin complex protein 2 (GCP2) and gamma-tubulin complex protein 3 (GCP3). Interacts with tubulin gamma chain.

It is found in the cytoplasm. The protein localises to the cytoskeleton. It localises to the flagellum axoneme. The protein resides in the flagellum basal body. In terms of biological role, component of the gamma-tubulin small complex (gamma-TuSC) involved in microtubule (MT) nucleation for the formation of median bodies and in the biogenesis of flagella. Gamma-TuSC may be required for the correct positioning of EB1 within the trophozoites. This is Gamma-tubulin small complex component GCP2 from Giardia intestinalis (strain ATCC 50803 / WB clone C6) (Giardia lamblia).